The chain runs to 292 residues: Retinal homeobox protein Rx3 (292 aa).

The interval 1 to 27 is disordered; that stretch reads MRLVGSQYKDMEDRLSPSARLVRSPGS. An Octapeptide motif motif is present at residues 32–39; sequence HSIESILG. Disordered stretches follow at residues 53–72 and 85–107; these read GSGK…DSNK and SPDL…KKHR. 2 stretches are compositionally biased toward basic and acidic residues: residues 57 to 72 and 92 to 102; these read TGKD…DSNK and DGGKLSDDENP. Positions 106 to 165 form a DNA-binding region, homeobox; sequence HRRNRTTFTTFQLHELERAFEKSHYPDVYSREELALKVNLPEVRVQVWFQNRRAKWRRQE. An OAR motif is present at residues 272-285; the sequence is TSIASLRMKAKEHI. The Nuclear localization signal signature appears at 278–282; the sequence is RMKAK.

Belongs to the paired homeobox family. Bicoid subfamily.

The protein resides in the nucleus. Plays a critical role in eye formation by regulating the initial specification of retinal cells and/or their subsequent proliferation. The protein is Retinal homeobox protein Rx3 (rx3) of Danio rerio (Zebrafish).